Here is a 282-residue protein sequence, read N- to C-terminus: MSPKTVFSTDTHREPIPPQPHPSGARPPQLPRELIPRHVAIVMDGNGRWAKQRGLPRTEGHKAGESSLFDVIEGALELGVPYLSAYAFSTENWKRSPDEVRFLMGFNRDVIRRRRDELHARGVRVRWAGRPGRLWKSVIKELTEAEELTKHNTKLTLQFCVNYGGRAEIADAAAALARDVAAGRLSPNRVTEATLARYLYHPDIPDVDLFIRSSGEQRLSNFLLWQSSYAEFVFLDTLWPDFDRRHFWQACEIYARRDRRYGGAEPNPVGPPQSAAGAQGQD.

Positions 1-30 (MSPKTVFSTDTHREPIPPQPHPSGARPPQL) are disordered. Asp44 is a catalytic residue. Asp44 contributes to the Mg(2+) binding site. Residues 45 to 48 (GNGR), Trp49, Arg57, His61, and 89 to 91 (STE) contribute to the substrate site. Catalysis depends on Asn92, which acts as the Proton acceptor. Residues Trp93, Arg95, Arg212, and 218 to 220 (RLS) each bind substrate. Residue Glu231 coordinates Mg(2+). Residues 262–282 (GGAEPNPVGPPQSAAGAQGQD) form a disordered region.

The protein belongs to the UPP synthase family. In terms of assembly, homodimer. The cofactor is Mg(2+).

The catalysed reaction is (2Z,6E)-farnesyl diphosphate + 10 isopentenyl diphosphate = di-trans,deca-cis-tridecaprenyl diphosphate + 10 diphosphate. It catalyses the reaction (2Z,6E)-farnesyl diphosphate + 11 isopentenyl diphosphate = di-trans,undeca-cis-tetradecaprenyl diphosphate + 11 diphosphate. It carries out the reaction (2Z,6E)-farnesyl diphosphate + 9 isopentenyl diphosphate = di-trans,nona-cis-dodecaprenyl diphosphate + 9 diphosphate. Functionally, catalyzes the synthesis of Z,E-mixed prenyl diphosphates by a condensation of isopentenyl diphosphate to an allylic diphosphate. It shows a large substrate specificity accepting dimethylallyl diphosphate (DMAPP), GPP, E,Efarnesyl diphosphate (FPP), E,E,E-geranylgeranyl diphosphate (GGPP), neryl diphosphate (Z-GPP), and (2Z,6E)-farnesyl diphosphate (Z,E-FPP) as allylic substrates. The enzyme exhibits the highest activity when Z,E-FPP is employed as an allylic substrate. The major product is dodecaprenyl diphosphate (C60) under every allylic substrate conditions, but the enzyme is also able to synthesize even C70 prenyl diphosphate as the maximum chain-length product. In Thermobifida fusca (strain YX), this protein is Trans,polycis-polyprenyl diphosphate synthase ((2Z,6E)-farnesyl diphosphate specific).